Here is a 469-residue protein sequence, read N- to C-terminus: Glutamate--tRNA ligase (469 aa).

The 'HIGH' region motif lies at Pro-9–Gly-19. Zn(2+) is bound by residues Cys-98, Cys-100, Cys-125, and Asp-127. The 'KMSKS' region motif lies at Lys-236–Arg-240. Lys-239 lines the ATP pocket.

Belongs to the class-I aminoacyl-tRNA synthetase family. Glutamate--tRNA ligase type 1 subfamily. In terms of assembly, monomer. Zn(2+) serves as cofactor.

The protein resides in the cytoplasm. The enzyme catalyses tRNA(Glu) + L-glutamate + ATP = L-glutamyl-tRNA(Glu) + AMP + diphosphate. Functionally, catalyzes the attachment of glutamate to tRNA(Glu) in a two-step reaction: glutamate is first activated by ATP to form Glu-AMP and then transferred to the acceptor end of tRNA(Glu). In Shewanella sp. (strain W3-18-1), this protein is Glutamate--tRNA ligase.